Here is a 589-residue protein sequence, read N- to C-terminus: Mini-chromosome maintenance complex-binding protein (589 aa).

The interval 163–211 (VDEEMTDSMDSSTLEAGRNGSPFKKMKVGEATSSASESQVPQTSGIPPA) is disordered. The span at 193–207 (ATSSASESQVPQTSG) shows a compositional bias: polar residues.

The protein belongs to the MCMBP family. In terms of assembly, interacts with the MCM complex.

The protein localises to the nucleus. In terms of biological role, associated component of the MCM complex that acts as a regulator of DNA replication. Binds to the MCM complex during late S phase and may act by promoting the disassembly of the MCM complex from chromatin. Required for sister chromatid cohesion. This chain is Mini-chromosome maintenance complex-binding protein (ETG1), found in Arabidopsis thaliana (Mouse-ear cress).